The following is a 395-amino-acid chain: Bone morphogenetic protein 2 (395 aa).

The signal sequence occupies residues 1 to 23; sequence MVAGTRCLLALLLPQVLLGGAAG. A propeptide spans 24–281 (cleaved by PCSK5); the sequence is LIPELGRRKF…GHPLHRREKR (258 aa). Ser86 is modified (phosphoserine). N-linked (GlcNAc...) asparagine glycosylation is found at Asn134 and Asn199. The disordered stretch occupies residues 270 to 292; the sequence is GKGHPLHRREKRQAKHKQRKRLK. Over residues 273–292 the composition is skewed to basic residues; sequence HPLHRREKRQAKHKQRKRLK. 3 disulfide bridges follow: Cys295-Cys360, Cys324-Cys392, and Cys328-Cys394. N-linked (GlcNAc...) asparagine glycosylation occurs at Asn337.

Belongs to the TGF-beta family. In terms of assembly, homodimer; disulfide-linked. Interacts with SOSTDC1. Interacts with GREM2, RGMA, RGMB and RGMC. Interacts with ASPN. Interacts with MAFP5. Interacts with FBN1 (via N-terminal domain) and FBN2. Interacts with type I receptor BMPR1A. Interacts with type II receptor BMPR2. Interacts with SCUBE3. Interacts with TNFAIP6 (primarily via Link domain); this interaction is inhibited by hyaluronan. Interacts with ERFE. Interacts with BMPR1A/ALK3; the interaction may induce HAMP expression. Forms heterodimers with BMP6 in vitro; the heterodimer then binds to its receptor BMPR1A /ALK3 and may induce HAMP expression. Interacts with TGFBR3.

The protein resides in the secreted. Its function is as follows. Growth factor of the TGF-beta superfamily that plays essential roles in many developmental processes, including cardiogenesis, neurogenesis, and osteogenesis. Induces cartilage and bone formation. Initiates the canonical BMP signaling cascade by associating with type I receptor BMPR1A and type II receptor BMPR2. Once all three components are bound together in a complex at the cell surface, BMPR2 phosphorylates and activates BMPR1A. In turn, BMPR1A propagates signal by phosphorylating SMAD1/5/8 that travel to the nucleus and act as activators and repressors of transcription of target genes. Also acts to promote expression of HAMP, via the interaction with its receptor BMPR1A/ALK3. Can also signal through non-canonical pathways such as ERK/MAP kinase signaling cascade that regulates osteoblast differentiation. Also stimulates the differentiation of myoblasts into osteoblasts via the EIF2AK3-EIF2A-ATF4 pathway by stimulating EIF2A phosphorylation which leads to increased expression of ATF4 which plays a central role in osteoblast differentiation. Acts as a positive regulator of odontoblast differentiation during mesenchymal tooth germ formation, expression is repressed during the bell stage by MSX1-mediated inhibition of CTNNB1 signaling. In Oryctolagus cuniculus (Rabbit), this protein is Bone morphogenetic protein 2 (BMP2).